Here is a 553-residue protein sequence, read N- to C-terminus: Protein spartin (553 aa).

The 82-residue stretch at 15–96 (IRTAYKAAMT…ETELRYRLKV (82 aa)) folds into the MIT domain. A disordered region spans residues 105–130 (DDSAVEATEESRAEMDTKRPPLLAEN). The span at 113-123 (EESRAEMDTKR) shows a compositional bias: basic and acidic residues. The 185-residue stretch at 325–509 (IVSAADFIAS…SQNVNYITPK (185 aa)) folds into the Senescence domain.

Interacts with Eps-15 (via C-terminal region); the interaction is required for spartin localization to the NMJ presynaptic membrane. In terms of tissue distribution, expressed in larval brain, ventral nerve cord and neuropil (at protein level).

The protein resides in the presynaptic cell membrane. Its subcellular location is the early endosome. It is found in the lipid droplet. During postembryonic development, functions with endocytic adapter Eps-15 in neurons to restrain synaptic growth, by inhibiting BMP signaling, and to control synaptic endocytosis. Required presynaptically for neuromuscular junction (NMJ) neurotransmission. Inhibits neuronal BMP signaling by promoting endocytic internalization and subsequent endosomal trafficking of the BMP receptor wit. In this way, regulates the Fmr1 translational regulator controlling Futsch expression to modulate neuronal microtubule stability, which controls both synaptogenesis and neuronal survival. The sequence is that of Protein spartin from Drosophila melanogaster (Fruit fly).